The primary structure comprises 294 residues: Protease HtpX homolog (294 aa).

The next 2 membrane-spanning stretches (helical) occupy residues 12-32 (VLFG…ASSF) and 34-54 (SPGV…YSYW). His138 is a binding site for Zn(2+). The active site involves Glu139. His142 lines the Zn(2+) pocket. Transmembrane regions (helical) follow at residues 152–172 (SVAG…VFFG) and 188–208 (LALL…QLAI). Residue Glu213 coordinates Zn(2+).

Belongs to the peptidase M48B family. Requires Zn(2+) as cofactor.

The protein localises to the cell membrane. The sequence is that of Protease HtpX homolog from Kineococcus radiotolerans (strain ATCC BAA-149 / DSM 14245 / SRS30216).